The primary structure comprises 387 residues: Alkanesulfonate monooxygenase (387 aa).

Belongs to the SsuD family.

It catalyses the reaction an alkanesulfonate + FMNH2 + O2 = an aldehyde + FMN + sulfite + H2O + 2 H(+). Functionally, catalyzes the desulfonation of aliphatic sulfonates. This is Alkanesulfonate monooxygenase from Ralstonia pickettii (strain 12J).